The sequence spans 429 residues: Glutamate-1-semialdehyde 2,1-aminomutase 2 (429 aa).

At K268 the chain carries N6-(pyridoxal phosphate)lysine.

Belongs to the class-III pyridoxal-phosphate-dependent aminotransferase family. HemL subfamily. In terms of assembly, homodimer. Pyridoxal 5'-phosphate serves as cofactor.

It localises to the cytoplasm. It carries out the reaction (S)-4-amino-5-oxopentanoate = 5-aminolevulinate. It functions in the pathway porphyrin-containing compound metabolism; protoporphyrin-IX biosynthesis; 5-aminolevulinate from L-glutamyl-tRNA(Glu): step 2/2. This chain is Glutamate-1-semialdehyde 2,1-aminomutase 2, found in Staphylococcus carnosus (strain TM300).